The following is a 212-amino-acid chain: Ribosomal RNA small subunit methyltransferase G (212 aa).

Residues Gly73, Phe78, 124-125, and Arg137 each bind S-adenosyl-L-methionine; that span reads IE.

It belongs to the methyltransferase superfamily. RNA methyltransferase RsmG family.

Its subcellular location is the cytoplasm. In terms of biological role, specifically methylates the N7 position of a guanine in 16S rRNA. This chain is Ribosomal RNA small subunit methyltransferase G, found in Karelsulcia muelleri (strain GWSS) (Sulcia muelleri).